A 318-amino-acid chain; its full sequence is Methionine import ATP-binding protein MetN (318 aa).

Residues 2-237 (IEIKDVGKIF…PEGELKKIIE (236 aa)) form the ABC transporter domain. 34–41 (GRSGAGKS) provides a ligand contact to ATP.

The protein belongs to the ABC transporter superfamily. Methionine importer (TC 3.A.1.24) family. The complex is composed of two ATP-binding proteins (MetN), two transmembrane proteins (MetI) and a solute-binding protein (MetQ).

Its subcellular location is the cell membrane. The enzyme catalyses L-methionine(out) + ATP + H2O = L-methionine(in) + ADP + phosphate + H(+). The catalysed reaction is D-methionine(out) + ATP + H2O = D-methionine(in) + ADP + phosphate + H(+). Part of the ABC transporter complex MetNIQ involved in methionine import. Responsible for energy coupling to the transport system. This Clostridium tetani (strain Massachusetts / E88) protein is Methionine import ATP-binding protein MetN.